Consider the following 724-residue polypeptide: Transcription factor dcp-66 (724 aa).

2 stretches are compositionally biased toward polar residues: residues 1 to 12 (MAQVQQVPSSPM) and 56 to 70 (GASTSIDTDDLQLSP). Disordered regions lie at residues 1-23 (MAQVQQVPSSPMNGIPEKNGNGL) and 55-129 (NGAS…KRRL). Over residues 85–95 (AQEKIKLKDDI) the composition is skewed to basic and acidic residues. Residues 105–119 (DDDDMEDEELGDEIN) are compositionally biased toward acidic residues. Residues 186-216 (EEQLRERLNMRREAENQLREEEAKLLVLRKM) are a coiled coil. 2 disordered regions span residues 328–361 (KELSAAETNASASASPAVQQSQQAQQPQQAQITQ) and 523–590 (AAPA…QLQQ). A compositionally biased stretch (low complexity) spans 332-358 (AAETNASASASPAVQQSQQAQQPQQAQ). Composition is skewed to polar residues over residues 527–541 (TSQTIPTSSTATVSS) and 551–564 (IPSSTGSSTPTQAV). The span at 565–590 (KTSTPIHSTPKSSSSSAKKTAAQLQQ) shows a compositional bias: low complexity.

In terms of tissue distribution, expressed at low levels in excretory cell, pharynx, vulva, and posterior neurons in adults. Strongly expressed in the excretory cell and more weakly in the pharynx in larva. Embryonic expression in the excretory cell.

The protein localises to the nucleus. Functionally, transcription factor which binds to the 5'-CCATACATTA-3' motif found in the promoter region of pgp-12 and activates its expression in the excretory cell. In Caenorhabditis elegans, this protein is Transcription factor dcp-66.